The primary structure comprises 469 residues: Glutamate--tRNA ligase (469 aa).

Residues 11–21 (PSPTGFIHLGN) carry the 'HIGH' region motif. The span at 116-131 (ASGEKPRYDGTWRPEP) shows a compositional bias: basic and acidic residues. The segment at 116–139 (ASGEKPRYDGTWRPEPGKVLPTPP) is disordered. Residues 243–247 (KMSKR) carry the 'KMSKS' region motif. Lys-246 contacts ATP.

Belongs to the class-I aminoacyl-tRNA synthetase family. Glutamate--tRNA ligase type 1 subfamily. In terms of assembly, monomer.

It localises to the cytoplasm. The catalysed reaction is tRNA(Glu) + L-glutamate + ATP = L-glutamyl-tRNA(Glu) + AMP + diphosphate. In terms of biological role, catalyzes the attachment of glutamate to tRNA(Glu) in a two-step reaction: glutamate is first activated by ATP to form Glu-AMP and then transferred to the acceptor end of tRNA(Glu). The protein is Glutamate--tRNA ligase of Paraburkholderia phymatum (strain DSM 17167 / CIP 108236 / LMG 21445 / STM815) (Burkholderia phymatum).